Reading from the N-terminus, the 290-residue chain is Shikimate dehydrogenase (NADP(+)) (290 aa).

Shikimate is bound by residues 20–22 (SLS) and threonine 67. Lysine 71 functions as the Proton acceptor in the catalytic mechanism. Shikimate-binding residues include asparagine 92 and aspartate 107. NADP(+) is bound by residues 132–136 (GAGGA) and methionine 228. Position 230 (tyrosine 230) interacts with shikimate. Glycine 251 contacts NADP(+).

It belongs to the shikimate dehydrogenase family. In terms of assembly, homodimer.

It carries out the reaction shikimate + NADP(+) = 3-dehydroshikimate + NADPH + H(+). The protein operates within metabolic intermediate biosynthesis; chorismate biosynthesis; chorismate from D-erythrose 4-phosphate and phosphoenolpyruvate: step 4/7. Its function is as follows. Involved in the biosynthesis of the chorismate, which leads to the biosynthesis of aromatic amino acids. Catalyzes the reversible NADPH linked reduction of 3-dehydroshikimate (DHSA) to yield shikimate (SA). This Geobacter sp. (strain M21) protein is Shikimate dehydrogenase (NADP(+)).